The chain runs to 145 residues: Basic phospholipase A2 cL038 (145 aa).

A signal peptide spans 1–21; the sequence is MYPAHLLVLLAVCVSLLGASA. The propeptide occupies 22–27; sequence IPPLPL. 7 cysteine pairs are disulfide-bonded: Cys-38/Cys-98, Cys-54/Cys-144, Cys-56/Cys-72, Cys-71/Cys-125, Cys-78/Cys-118, Cys-87/Cys-111, and Cys-105/Cys-116. The Ca(2+) site is built by Tyr-55, Gly-57, and Gly-59. The active site involves His-75. Asp-76 provides a ligand contact to Ca(2+). Residue Asp-119 is part of the active site.

This sequence belongs to the phospholipase A2 family. Group I subfamily. D49 sub-subfamily. Ca(2+) serves as cofactor. Expressed by the venom gland.

The protein localises to the secreted. The catalysed reaction is a 1,2-diacyl-sn-glycero-3-phosphocholine + H2O = a 1-acyl-sn-glycero-3-phosphocholine + a fatty acid + H(+). Functionally, PLA2 catalyzes the calcium-dependent hydrolysis of the 2-acyl groups in 3-sn-phosphoglycerides. This Laticauda semifasciata (Black-banded sea krait) protein is Basic phospholipase A2 cL038.